The primary structure comprises 96 residues: Large ribosomal subunit protein bL21 (96 aa).

This sequence belongs to the bacterial ribosomal protein bL21 family. In terms of assembly, part of the 50S ribosomal subunit. Contacts protein L20.

This protein binds to 23S rRNA in the presence of protein L20. This chain is Large ribosomal subunit protein bL21, found in Chlorobium chlorochromatii (strain CaD3).